The following is a 104-amino-acid chain: uncharacterized protein (104 aa).

A run of 2 helical transmembrane segments spans residues 26–46 (IGTG…FTFF) and 70–90 (GLLG…IIAI).

The protein localises to the membrane. This is an uncharacterized protein from Acanthamoeba polyphaga mimivirus (APMV).